The primary structure comprises 331 residues: Probable serine hydrolase (331 aa).

Residues 1 to 28 (MGQTRVAATTAAQSPAAELSPETNGQTE) are disordered. Positions 7–17 (AATTAAQSPAA) are enriched in low complexity. An AB hydrolase-1 domain is found at 63–163 (PIIALHGWQD…EVEKLINIDI (101 aa)). Serine 138 is a catalytic residue.

This sequence belongs to the AB hydrolase superfamily. As to expression, ubiquitously expressed before embryonic stage 11. At stage 11, expression is concentrated in the foregut and posterior midgut. By stage 15, in gastric caeca, pharynx, posterior spiracles and anterior edge of midgut. At the end of embryogenesis, expression is confined to gastric caeca. During third instar larvae, expressed at low levels in gastric caeca, midgut and hindgut and high level in fat body.

Its function is as follows. May have a role in detoxification and digestion during embryogenesis and larval development. This chain is Probable serine hydrolase (kraken), found in Drosophila melanogaster (Fruit fly).